We begin with the raw amino-acid sequence, 497 residues long: FAD-linked oxidoreductase fmqD (497 aa).

The signal sequence occupies residues 1–17 (MQYIPFLISGLVPVALS). The FAD-binding PCMH-type domain maps to 68-243 (NDPSYVATVK…TSATYRIYDQ (176 aa)). Asn99, Asn261, and Asn288 each carry an N-linked (GlcNAc...) asparagine glycan.

This sequence belongs to the oxygen-dependent FAD-linked oxidoreductase family.

Its subcellular location is the secreted. The protein resides in the cell wall. The protein operates within alkaloid biosynthesis. Its function is as follows. FAD-linked oxidoreductase; part of the gene cluster that mediates the biosynthesis of the antitumor fumiquinazolines that confer a dual-usage capability to defend against phagocytes in the environment and animal hosts. The simplest member is fumiquinazoline F (FQF) with a 6-6-6 tricyclic core derived from anthranilic acid (Ant), tryptophan (Trp), and alanine (Ala). The trimodular NRPS fmqA is responsible for FQF formation. Modules 1, 2 and 3 of fmqA are predicted to activate and load Ant, Trp and Ala, respectively, providing for the assembly of an Ant-Trp-Ala-S-enzyme intermediate that would undergo double cyclization for chain release and generation of the tricyclic 6-6-6 product fumiquinazoline F. The presence of an E domain predicted for module 2 of fmqA is consistent with epimerization of L-Trp to D-Trp during assembly to generate the R-stereocenter at C14 of FQF. The FAD-dependent monooxygenase fmqB and the monomodular NRPS fmqC then maturate FQF to FQA. FmqB oxidizes the 2',3'-double bond of the indole side chain of FQF, and fmqC activates L-Ala as the adenylate, installs it as the pantetheinyl thioester on its carrier protein domain, and acylates the oxidized indole for subsequent intramolecular cyclization to create the 6-5-5-imidazolindolone of FQA. The FAD-linked oxidoreductase fmqD introduces a third layer of scaffold complexity by converting FQA to the spirohemiaminal FQC, presumably by catalyzing the formation of a transient imine within the pyrazinone ring. FQC subsequently converts nonenzymatically to the known cyclic aminal FQD. This Aspergillus fumigatus (strain ATCC MYA-4609 / CBS 101355 / FGSC A1100 / Af293) (Neosartorya fumigata) protein is FAD-linked oxidoreductase fmqD.